The primary structure comprises 449 residues: Anthocyanidin 3-O-glucosyltransferase 1 (449 aa).

His3 acts as the Proton acceptor in catalysis. His3 lines the an anthocyanidin pocket. Catalysis depends on Asp103, which acts as the Charge relay. Residues Thr125, Ala325, Gln327, His342, Trp345, Asn346, Ser347, and Glu350 each coordinate UDP-alpha-D-glucose. Ala365 is a binding site for an anthocyanidin. Residues Glu366 and Gln367 each contribute to the UDP-alpha-D-glucose site.

Belongs to the UDP-glycosyltransferase family. As to expression, expressed in cotyledons and roots, but not in leaves.

It catalyses the reaction an anthocyanidin + UDP-alpha-D-glucose + H(+) = an anthocyanidin 3-O-beta-D-glucoside + UDP. It participates in pigment biosynthesis; anthocyanin biosynthesis. In terms of biological role, in the presence of other necessary color factors, this glycosylation reaction allows the accumulation of anthocyanin pigments. The protein is Anthocyanidin 3-O-glucosyltransferase 1 (GT1) of Manihot esculenta (Cassava).